The chain runs to 338 residues: Methionine import ATP-binding protein MetN 1 (338 aa).

An ABC transporter domain is found at 2–241; sequence IELHQVSKSF…AKHATTKRFV (240 aa). 38–45 lines the ATP pocket; that stretch reads GYSGAGKS.

It belongs to the ABC transporter superfamily. Methionine importer (TC 3.A.1.24) family. As to quaternary structure, the complex is composed of two ATP-binding proteins (MetN), two transmembrane proteins (MetI) and a solute-binding protein (MetQ).

Its subcellular location is the cell membrane. It catalyses the reaction L-methionine(out) + ATP + H2O = L-methionine(in) + ADP + phosphate + H(+). The catalysed reaction is D-methionine(out) + ATP + H2O = D-methionine(in) + ADP + phosphate + H(+). In terms of biological role, part of the ABC transporter complex MetNIQ involved in methionine import. Responsible for energy coupling to the transport system. The protein is Methionine import ATP-binding protein MetN 1 of Listeria monocytogenes serovar 1/2a (strain ATCC BAA-679 / EGD-e).